The sequence spans 345 residues: N-acetyl-gamma-glutamyl-phosphate reductase (345 aa).

Cys149 is an active-site residue.

It belongs to the NAGSA dehydrogenase family. Type 1 subfamily.

The protein localises to the cytoplasm. The catalysed reaction is N-acetyl-L-glutamate 5-semialdehyde + phosphate + NADP(+) = N-acetyl-L-glutamyl 5-phosphate + NADPH + H(+). Its pathway is amino-acid biosynthesis; L-arginine biosynthesis; N(2)-acetyl-L-ornithine from L-glutamate: step 3/4. In terms of biological role, catalyzes the NADPH-dependent reduction of N-acetyl-5-glutamyl phosphate to yield N-acetyl-L-glutamate 5-semialdehyde. The protein is N-acetyl-gamma-glutamyl-phosphate reductase of Bacillus anthracis.